The sequence spans 173 residues: RNA pyrophosphohydrolase (173 aa).

A Nudix hydrolase domain is found at 6–149 (GFRANVGIIL…KRSVYRRALQ (144 aa)). The Nudix box motif lies at 38–59 (GGIDRGETPMDAMYRELWEEVG).

It belongs to the Nudix hydrolase family. RppH subfamily. A divalent metal cation serves as cofactor.

In terms of biological role, accelerates the degradation of transcripts by removing pyrophosphate from the 5'-end of triphosphorylated RNA, leading to a more labile monophosphorylated state that can stimulate subsequent ribonuclease cleavage. The sequence is that of RNA pyrophosphohydrolase from Psychrobacter cryohalolentis (strain ATCC BAA-1226 / DSM 17306 / VKM B-2378 / K5).